Reading from the N-terminus, the 334-residue chain is Ribosomal RNA small subunit methyltransferase H (334 aa).

Residues 34-36 (GGY), Asp-52, Ala-87, Asp-100, and Gln-107 each bind S-adenosyl-L-methionine.

The protein belongs to the methyltransferase superfamily. RsmH family.

It is found in the cytoplasm. It carries out the reaction cytidine(1402) in 16S rRNA + S-adenosyl-L-methionine = N(4)-methylcytidine(1402) in 16S rRNA + S-adenosyl-L-homocysteine + H(+). Specifically methylates the N4 position of cytidine in position 1402 (C1402) of 16S rRNA. The sequence is that of Ribosomal RNA small subunit methyltransferase H from Maricaulis maris (strain MCS10) (Caulobacter maris).